A 333-amino-acid chain; its full sequence is Glycerol-3-phosphate dehydrogenase [NAD(P)+] (333 aa).

Residues Trp-12, His-31, and Lys-105 each coordinate NADPH. Positions 105, 134, and 136 each coordinate sn-glycerol 3-phosphate. Ala-138 is a binding site for NADPH. Residues Lys-189, Asp-242, Ser-252, Arg-253, and Asn-254 each coordinate sn-glycerol 3-phosphate. The active-site Proton acceptor is the Lys-189. Arg-253 contributes to the NADPH binding site. NADPH contacts are provided by Val-278 and Glu-280.

This sequence belongs to the NAD-dependent glycerol-3-phosphate dehydrogenase family.

The protein localises to the cytoplasm. It catalyses the reaction sn-glycerol 3-phosphate + NAD(+) = dihydroxyacetone phosphate + NADH + H(+). The enzyme catalyses sn-glycerol 3-phosphate + NADP(+) = dihydroxyacetone phosphate + NADPH + H(+). The protein operates within membrane lipid metabolism; glycerophospholipid metabolism. Functionally, catalyzes the reduction of the glycolytic intermediate dihydroxyacetone phosphate (DHAP) to sn-glycerol 3-phosphate (G3P), the key precursor for phospholipid synthesis. This Brachyspira hyodysenteriae (strain ATCC 49526 / WA1) protein is Glycerol-3-phosphate dehydrogenase [NAD(P)+].